The sequence spans 211 residues: uncharacterized protein (211 aa).

The next 3 helical transmembrane spans lie at 22-42 (FINF…GLKV), 111-131 (IIGA…WFPV), and 133-153 (GMAG…FMIT).

It to E.coli YkgB. To H.influenzae HI_0219.

Its subcellular location is the cell membrane. This is an uncharacterized protein from Mannheimia haemolytica (Pasteurella haemolytica).